Consider the following 363-residue polypeptide: Protein-arginine kinase (363 aa).

The 232-residue stretch at 24-255 folds into the Phosphagen kinase C-terminal domain; sequence IVLSSRIRLA…QQLIAQERAA (232 aa). Residues 27–31, H92, R126, 177–181, and 208–213 contribute to the ATP site; these read SSRIR, RASVM, and RGTYGE. Residues 338–343 carry the RDXXRA motif of the pArg binding pocket involved in allosteric regulation motif; the sequence is RDVRRA.

This sequence belongs to the ATP:guanido phosphotransferase family.

It carries out the reaction L-arginyl-[protein] + ATP = N(omega)-phospho-L-arginyl-[protein] + ADP + H(+). Appears to be allosterically activated by the binding of pArg-containing polypeptides to the pArg-binding pocket localized in the C-terminal domain of McsB. Functionally, catalyzes the specific phosphorylation of arginine residues in a large number of proteins. Is part of the bacterial stress response system. Protein arginine phosphorylation has a physiologically important role and is involved in the regulation of many critical cellular processes, such as protein homeostasis, motility, competence, and stringent and stress responses, by regulating gene expression and protein activity. In Geobacillus thermodenitrificans (strain NG80-2), this protein is Protein-arginine kinase.